The following is a 67-amino-acid chain: Inosine/xanthosine triphosphatase (67 aa).

Belongs to the YjjX NTPase family. As to quaternary structure, homodimer. Mg(2+) is required as a cofactor. Requires Mn(2+) as cofactor.

The enzyme catalyses XTP + H2O = XDP + phosphate + H(+). It carries out the reaction ITP + H2O = IDP + phosphate + H(+). Functionally, phosphatase that hydrolyzes non-canonical purine nucleotides such as XTP and ITP to their respective diphosphate derivatives. Probably excludes non-canonical purines from DNA/RNA precursor pool, thus preventing their incorporation into DNA/RNA and avoiding chromosomal lesions. The chain is Inosine/xanthosine triphosphatase from Enterobacter cloacae.